The primary structure comprises 514 residues: Ferrochelatase-2, chloroplastic (514 aa).

This sequence belongs to the ferrochelatase family.

It is found in the plastid. The protein resides in the chloroplast. The enzyme catalyses heme b + 2 H(+) = protoporphyrin IX + Fe(2+). Its pathway is porphyrin-containing compound metabolism; protoheme biosynthesis; protoheme from protoporphyrin-IX: step 1/1. Functionally, catalyzes the ferrous insertion into protoporphyrin IX. In Cucumis sativus (Cucumber), this protein is Ferrochelatase-2, chloroplastic (HEMH).